A 256-amino-acid chain; its full sequence is Thiazole synthase (256 aa).

Lys95 acts as the Schiff-base intermediate with DXP in catalysis. 1-deoxy-D-xylulose 5-phosphate-binding positions include Gly156, 182-183, and 204-205; these read AG and NT.

Belongs to the ThiG family. Homotetramer. Forms heterodimers with either ThiH or ThiS.

The protein resides in the cytoplasm. It catalyses the reaction [ThiS sulfur-carrier protein]-C-terminal-Gly-aminoethanethioate + 2-iminoacetate + 1-deoxy-D-xylulose 5-phosphate = [ThiS sulfur-carrier protein]-C-terminal Gly-Gly + 2-[(2R,5Z)-2-carboxy-4-methylthiazol-5(2H)-ylidene]ethyl phosphate + 2 H2O + H(+). It functions in the pathway cofactor biosynthesis; thiamine diphosphate biosynthesis. Catalyzes the rearrangement of 1-deoxy-D-xylulose 5-phosphate (DXP) to produce the thiazole phosphate moiety of thiamine. Sulfur is provided by the thiocarboxylate moiety of the carrier protein ThiS. In vitro, sulfur can be provided by H(2)S. The chain is Thiazole synthase from Salmonella enteritidis PT4 (strain P125109).